The primary structure comprises 439 residues: Ribosomal protein uS12 methylthiotransferase RimO (439 aa).

Positions 7–119 constitute an MTTase N-terminal domain; that stretch reads KQLCLISLGC…IDILIAKKQN (113 aa). The [4Fe-4S] cluster site is built by C16, C50, C82, C151, C155, and C158. The 232-residue stretch at 137–368 folds into the Radical SAM core domain; the sequence is TGSSVHAYVK…ALKHQNHSFK (232 aa).

Belongs to the methylthiotransferase family. RimO subfamily. [4Fe-4S] cluster serves as cofactor.

Its subcellular location is the cytoplasm. It carries out the reaction L-aspartate(89)-[ribosomal protein uS12]-hydrogen + (sulfur carrier)-SH + AH2 + 2 S-adenosyl-L-methionine = 3-methylsulfanyl-L-aspartate(89)-[ribosomal protein uS12]-hydrogen + (sulfur carrier)-H + 5'-deoxyadenosine + L-methionine + A + S-adenosyl-L-homocysteine + 2 H(+). Catalyzes the methylthiolation of an aspartic acid residue of ribosomal protein uS12. The sequence is that of Ribosomal protein uS12 methylthiotransferase RimO from Helicobacter pylori (strain J99 / ATCC 700824) (Campylobacter pylori J99).